The sequence spans 248 residues: MGQKIHPHGLRLGITSDWKTHWYADKDYANYVAEDIKIREYLEKGLDRAGIADVVIERTRDRVRVDIHTARPGIVIGRRGAEADRIRRELEKLTGKMVALNILEVKQVDANATLVAQSVAEQLVNRVAFRRAMRKAIQSAMRQPQVKGIKILLSGRLGGAEMSRTERYHEGRVPLHTLRAEIDYGTAEAHTTFGRIGIKVWIYKGDVVGGVRESELNAPAQGRGRGDRNGRPRRGGQRRQRAQQKQEG.

The 69-residue stretch at 38 to 106 (IREYLEKGLD…MVALNILEVK (69 aa)) folds into the KH type-2 domain. The segment at 214–248 (SELNAPAQGRGRGDRNGRPRRGGQRRQRAQQKQEG) is disordered. The segment covering 231–242 (RPRRGGQRRQRA) has biased composition (basic residues).

The protein belongs to the universal ribosomal protein uS3 family. In terms of assembly, part of the 30S ribosomal subunit. Forms a tight complex with proteins S10 and S14.

Its function is as follows. Binds the lower part of the 30S subunit head. Binds mRNA in the 70S ribosome, positioning it for translation. The chain is Small ribosomal subunit protein uS3 from Corynebacterium aurimucosum (strain ATCC 700975 / DSM 44827 / CIP 107346 / CN-1) (Corynebacterium nigricans).